We begin with the raw amino-acid sequence, 482 residues long: 2-succinylbenzoate--CoA ligase (482 aa).

It belongs to the ATP-dependent AMP-binding enzyme family. MenE subfamily.

The catalysed reaction is 2-succinylbenzoate + ATP + CoA = 2-succinylbenzoyl-CoA + AMP + diphosphate. Its pathway is quinol/quinone metabolism; 1,4-dihydroxy-2-naphthoate biosynthesis; 1,4-dihydroxy-2-naphthoate from chorismate: step 5/7. It functions in the pathway quinol/quinone metabolism; menaquinone biosynthesis. Its function is as follows. Converts 2-succinylbenzoate (OSB) to 2-succinylbenzoyl-CoA (OSB-CoA). The polypeptide is 2-succinylbenzoate--CoA ligase (Bacillus cereus (strain AH820)).